Reading from the N-terminus, the 166-residue chain is Regulatory protein RecX (166 aa).

It belongs to the RecX family.

It is found in the cytoplasm. In terms of biological role, modulates RecA activity. This Escherichia coli O7:K1 (strain IAI39 / ExPEC) protein is Regulatory protein RecX.